Reading from the N-terminus, the 547-residue chain is Chaperonin GroEL (547 aa).

Residues 30 to 33 (TLGP), lysine 51, 87 to 91 (DGTTT), glycine 415, and aspartate 496 each bind ATP. Residues 525 to 547 (KPEPKSPAGGPGMGGMGGMDGMM) form a disordered region. Residues 533–547 (GGPGMGGMGGMDGMM) show a composition bias toward gly residues.

It belongs to the chaperonin (HSP60) family. Forms a cylinder of 14 subunits composed of two heptameric rings stacked back-to-back. Interacts with the co-chaperonin GroES.

It is found in the cytoplasm. It carries out the reaction ATP + H2O + a folded polypeptide = ADP + phosphate + an unfolded polypeptide.. Together with its co-chaperonin GroES, plays an essential role in assisting protein folding. The GroEL-GroES system forms a nano-cage that allows encapsulation of the non-native substrate proteins and provides a physical environment optimized to promote and accelerate protein folding. The sequence is that of Chaperonin GroEL from Cereibacter sphaeroides (strain ATCC 17029 / ATH 2.4.9) (Rhodobacter sphaeroides).